Reading from the N-terminus, the 263-residue chain is Lens fiber major intrinsic protein (263 aa).

Residues 1–9 (MWELRSASF) lie on the Cytoplasmic side of the membrane. A helical transmembrane segment spans residues 10-29 (WRAIFAEFFATLFYVFFGLG). The Extracellular segment spans residues 30–41 (SSLRWAPGPLHV). A helical membrane pass occupies residues 42 to 59 (LQVALAFGLALATLVQTV). Topologically, residues 60 to 61 (GH) are cytoplasmic. Residues 62–77 (ISGAHVNPAVTFAFLV) constitute an intramembrane region (discontinuously helical). The NPA 1 motif lies at 68 to 70 (NPA). Topologically, residues 78-82 (GSQMS) are cytoplasmic. The helical transmembrane segment at 83 to 106 (LLRAFCYIAAQLLGAVAGAAVLYS) threads the bilayer. Over 107-127 (VTPPAVRGNLALNTLHAGVSV) the chain is Extracellular. A helical transmembrane segment spans residues 128–148 (GQATTVEIFLTLQFVLCIFAT). Topologically, residues 149–156 (YDERRNGR) are cytoplasmic. The helical transmembrane segment at 157-175 (MGSVALAVGFSLTLGHLFG) threads the bilayer. Topologically, residues 176-178 (MYY) are extracellular. The segment at residues 179–193 (TGAGMNPARSFAPAI) is an intramembrane region (discontinuously helical). Positions 184–186 (NPA) match the NPA 2 motif. Residues 194-200 (LTRNFSN) lie on the Extracellular side of the membrane. Residues 201–222 (HWVYWVGPIIGGGLGSLLYDFL) form a helical membrane-spanning segment. The Cytoplasmic portion of the chain corresponds to 223 to 263 (LFPRLKSVSERLSILKGARPSDSNGQPEGTGEPVELKTQAL). The segment at 227–237 (LKSVSERLSIL) is interaction with CALM. Residues Ser235, Ser243, and Ser245 each carry the phosphoserine modification. Positions 240-263 (ARPSDSNGQPEGTGEPVELKTQAL) are disordered. Asn246 carries the post-translational modification Deamidated asparagine.

This sequence belongs to the MIP/aquaporin (TC 1.A.8) family. As to quaternary structure, homotetramer; each monomer provides an independent water pore. Two homotetramers on opposing membranes can dimerize, forming a cell-cell junction. Interacts with CALM; the calcium-calmodulin/CALM complex interacts with the cytoplasmic domains of two aquaporins, leading to channel closure. Interacts with BFSP1 (via C-terminus); prevents calcium-dependent inhibition of the water channel activity. Post-translationally, subject to partial proteolytic cleavage in the eye lens core. Partial proteolysis promotes interactions between tetramers from adjoining membranes. In terms of processing, fatty acylated at Met-1 and Lys-238. The acyl modifications, in decreasing order of ion abundance, are: oleoyl (C18:1) &gt; palmitoyl (C16:0) &gt; stearoyl (C18:0) &gt; eicosenoyl (C20:1) &gt; dihomo-gamma-linolenoyl (C20:3) &gt; palmitoleoyl (C16:1) &gt; eicosadienoyl (C20:2).

It is found in the cell membrane. The protein resides in the cell junction. It carries out the reaction H2O(in) = H2O(out). Its activity is regulated as follows. The water channel activity is inhibited by calcium through calmodulin/CALM. In terms of biological role, aquaporins form homotetrameric transmembrane channels, with each monomer independently mediating water transport across the plasma membrane along its osmotic gradient. Specifically expressed in lens fiber cells, this aquaporin is crucial for maintaining lens water homeostasis and transparency. Beyond water permeability, it also acts as a cell-to-cell adhesion molecule, forming thin junctions between lens fiber cells that are essential for maintaining the ordered structure and transparency of the lens. The chain is Lens fiber major intrinsic protein from Rattus norvegicus (Rat).